A 394-amino-acid chain; its full sequence is Large ribosomal subunit protein mL44 (394 aa).

The N-terminal 21 residues, 1–21 (MFRHVAQNLGSRNTSIQSYRL), are a transit peptide targeting the mitochondrion.

It belongs to the ribonuclease III family. Mitochondrion-specific ribosomal protein mL44 subfamily. Component of the mitochondrial large ribosomal subunit (mt-LSU).

It is found in the mitochondrion. Component of the mitochondrial ribosome. May have a function in the assembly/stability of nascent mitochondrial polypeptides exiting the ribosome. This is Large ribosomal subunit protein mL44 from Caenorhabditis elegans.